Reading from the N-terminus, the 245-residue chain is Pyridoxine 5'-phosphate synthase (245 aa).

Asn-9 contacts 3-amino-2-oxopropyl phosphate. 11-12 (DH) contributes to the 1-deoxy-D-xylulose 5-phosphate binding site. Residue Arg-20 coordinates 3-amino-2-oxopropyl phosphate. Residue His-45 is the Proton acceptor of the active site. Residues Arg-47 and His-52 each contribute to the 1-deoxy-D-xylulose 5-phosphate site. The active-site Proton acceptor is Glu-72. Residue Thr-102 coordinates 1-deoxy-D-xylulose 5-phosphate. Residue His-193 is the Proton donor of the active site. 3-amino-2-oxopropyl phosphate is bound by residues Gly-194 and 215 to 216 (GH).

This sequence belongs to the PNP synthase family. As to quaternary structure, homooctamer; tetramer of dimers.

The protein resides in the cytoplasm. It carries out the reaction 3-amino-2-oxopropyl phosphate + 1-deoxy-D-xylulose 5-phosphate = pyridoxine 5'-phosphate + phosphate + 2 H2O + H(+). The protein operates within cofactor biosynthesis; pyridoxine 5'-phosphate biosynthesis; pyridoxine 5'-phosphate from D-erythrose 4-phosphate: step 5/5. In terms of biological role, catalyzes the complicated ring closure reaction between the two acyclic compounds 1-deoxy-D-xylulose-5-phosphate (DXP) and 3-amino-2-oxopropyl phosphate (1-amino-acetone-3-phosphate or AAP) to form pyridoxine 5'-phosphate (PNP) and inorganic phosphate. The polypeptide is Pyridoxine 5'-phosphate synthase (Shewanella oneidensis (strain ATCC 700550 / JCM 31522 / CIP 106686 / LMG 19005 / NCIMB 14063 / MR-1)).